A 652-amino-acid polypeptide reads, in one-letter code: DNA ligase (652 aa).

NAD(+)-binding positions include 29–33 (DAEYD), 78–79 (SL), and Glu-107. Lys-109 acts as the N6-AMP-lysine intermediate in catalysis. Residues Arg-130, Glu-164, Lys-278, and Lys-302 each coordinate NAD(+). 4 residues coordinate Zn(2+): Cys-395, Cys-398, Cys-413, and Cys-418. The BRCT domain occupies 577-652 (ASDAALTGMT…IKDEAWLESL (76 aa)).

It belongs to the NAD-dependent DNA ligase family. LigA subfamily. Mg(2+) is required as a cofactor. Requires Mn(2+) as cofactor.

The catalysed reaction is NAD(+) + (deoxyribonucleotide)n-3'-hydroxyl + 5'-phospho-(deoxyribonucleotide)m = (deoxyribonucleotide)n+m + AMP + beta-nicotinamide D-nucleotide.. Its function is as follows. DNA ligase that catalyzes the formation of phosphodiester linkages between 5'-phosphoryl and 3'-hydroxyl groups in double-stranded DNA using NAD as a coenzyme and as the energy source for the reaction. It is essential for DNA replication and repair of damaged DNA. The protein is DNA ligase of Streptococcus mutans serotype c (strain ATCC 700610 / UA159).